Consider the following 195-residue polypeptide: 3-isopropylmalate dehydratase small subunit (195 aa).

This sequence belongs to the LeuD family. LeuD type 1 subfamily. As to quaternary structure, heterodimer of LeuC and LeuD.

The catalysed reaction is (2R,3S)-3-isopropylmalate = (2S)-2-isopropylmalate. The protein operates within amino-acid biosynthesis; L-leucine biosynthesis; L-leucine from 3-methyl-2-oxobutanoate: step 2/4. Catalyzes the isomerization between 2-isopropylmalate and 3-isopropylmalate, via the formation of 2-isopropylmaleate. In Frankia alni (strain DSM 45986 / CECT 9034 / ACN14a), this protein is 3-isopropylmalate dehydratase small subunit.